The sequence spans 366 residues: Alcohol dehydrogenase (366 aa).

Zn(2+) contacts are provided by C41, H62, E63, and D167.

It belongs to the zinc-containing alcohol dehydrogenase family. Homotetramer. Zn(2+) serves as cofactor.

It carries out the reaction a primary alcohol + NAD(+) = an aldehyde + NADH + H(+). The enzyme catalyses a secondary alcohol + NAD(+) = a ketone + NADH + H(+). The catalysed reaction is (R,R)-butane-2,3-diol + NAD(+) = (R)-acetoin + NADH + H(+). It catalyses the reaction an aldehyde + NAD(+) + H2O = a carboxylate + NADH + 2 H(+). In terms of biological role, multifunctional alcohol dehydrogenase exhibiting NAD(+)-dependent dehydrogenase activities for 2,3-butanediol, ethanol and acetaldehyde, and reductase activities for acetoin (NADH-dependent), and diacetyl and acetaldehyde (independently of whether NADH or NADPH is the reductant). The rate of oxidation of 2,3-butanediol is much higher than for the oxidation of ethanol. Has acetaldehyde dehydrogenase activity leading to acetate formation. May function in the release of excess reducing power in the absence of exogenous hydrogen acceptors such as oxygen. This Cupriavidus necator (strain ATCC 17699 / DSM 428 / KCTC 22496 / NCIMB 10442 / H16 / Stanier 337) (Ralstonia eutropha) protein is Alcohol dehydrogenase (adh).